We begin with the raw amino-acid sequence, 208 residues long: Small ribosomal subunit protein uS4 (208 aa).

The region spanning 98–164 (SRLDNVVYRM…DRIKFALELA (67 aa)) is the S4 RNA-binding domain.

The protein belongs to the universal ribosomal protein uS4 family. Part of the 30S ribosomal subunit. Contacts protein S5. The interaction surface between S4 and S5 is involved in control of translational fidelity.

One of the primary rRNA binding proteins, it binds directly to 16S rRNA where it nucleates assembly of the body of the 30S subunit. In terms of biological role, with S5 and S12 plays an important role in translational accuracy. This Nitrosococcus oceani (strain ATCC 19707 / BCRC 17464 / JCM 30415 / NCIMB 11848 / C-107) protein is Small ribosomal subunit protein uS4.